The sequence spans 230 residues: Ion-translocating oxidoreductase complex subunit E (230 aa).

The next 6 membrane-spanning stretches (helical) occupy residues 18–38 (ALVQ…ATNA), 39–59 (LGLG…VSAL), 63–83 (TPAE…VSAV), 86–106 (LINA…PLIV), 125–145 (WLSA…MFVL), and 182–202 (PFLL…MLAV).

It belongs to the NqrDE/RnfAE family. As to quaternary structure, the complex is composed of six subunits: RsxA, RsxB, RsxC, RsxD, RsxE and RsxG.

It is found in the cell inner membrane. Part of a membrane-bound complex that couples electron transfer with translocation of ions across the membrane. Required to maintain the reduced state of SoxR. This is Ion-translocating oxidoreductase complex subunit E from Salmonella dublin (strain CT_02021853).